The sequence spans 254 residues: E3 ubiquitin-protein ligase NEURL3 (254 aa).

Positions 17–174 (ALSFHGDATG…TTKAIELLDP (158 aa)) constitute an NHR domain. The RING-type zinc-finger motif lies at 197–236 (CVICFHNTANTRLMPCGHSQFCGSCAWHIFKDTARCPMCR).

The protein resides in the cytoplasm. It carries out the reaction S-ubiquitinyl-[E2 ubiquitin-conjugating enzyme]-L-cysteine + [acceptor protein]-L-lysine = [E2 ubiquitin-conjugating enzyme]-L-cysteine + N(6)-ubiquitinyl-[acceptor protein]-L-lysine.. The protein operates within protein modification; protein ubiquitination. In terms of biological role, E3 ubiquitin-protein ligase that plays a role in various biological processes such as lung development or innate immunity. Seems to utilize UBE2E1. Promotes innate antiviral response by catalyzing 'Lys-63'-linked ubiquitination of IRF7. Also inhibits hepatitis C virus assembly by directly binding to viral E1 envelope glycoprotein to disrupt its interaction with E2. Plays an essential role in TLR4-mediated activation of MAPK pathways by promoting 'Lys-48'-linked polyubiquitination of the phosphatase DUSP1/MKP1. This Rattus norvegicus (Rat) protein is E3 ubiquitin-protein ligase NEURL3 (Neurl3).